The sequence spans 197 residues: Prefoldin subunit 3 (197 aa).

Residue Ala-2 is modified to N-acetylalanine. Position 59 is an N6-acetyllysine (Lys-59).

This sequence belongs to the prefoldin subunit alpha family. In terms of assembly, heterohexamer of two PFD-alpha type and four PFD-beta type subunits. Binds to the C-terminal part of VHL.

The protein localises to the cytoplasm. It is found in the nucleus. In terms of biological role, binds specifically to cytosolic chaperonin (c-CPN) and transfers target proteins to it. Binds to nascent polypeptide chain and promotes folding in an environment in which there are many competing pathways for nonnative proteins. This is Prefoldin subunit 3 (VBP1) from Bos taurus (Bovine).